The following is a 201-amino-acid chain: Small ribosomal subunit protein eS1 (201 aa).

Belongs to the eukaryotic ribosomal protein eS1 family.

The polypeptide is Small ribosomal subunit protein eS1 (Methanoregula boonei (strain DSM 21154 / JCM 14090 / 6A8)).